The sequence spans 272 residues: ATP synthase subunit a (272 aa).

6 consecutive transmembrane segments (helical) span residues 42 to 62, 108 to 128, 140 to 162, 177 to 197, 219 to 239, and 241 to 261; these read IDSL…AGFV, FVWI…LPCI, ILPS…LMIF, LIYH…LEII, LIFI…LSVP, and AIFH…LTII.

It belongs to the ATPase A chain family. In terms of assembly, F-type ATPases have 2 components, CF(1) - the catalytic core - and CF(0) - the membrane proton channel. CF(1) has five subunits: alpha(3), beta(3), gamma(1), delta(1), epsilon(1). CF(0) has three main subunits: a(1), b(2) and c(9-12). The alpha and beta chains form an alternating ring which encloses part of the gamma chain. CF(1) is attached to CF(0) by a central stalk formed by the gamma and epsilon chains, while a peripheral stalk is formed by the delta and b chains.

Its subcellular location is the cell inner membrane. Functionally, key component of the proton channel; it plays a direct role in the translocation of protons across the membrane. The protein is ATP synthase subunit a of Blochmanniella floridana.